We begin with the raw amino-acid sequence, 398 residues long: Glycosyltransferase GlyF (398 aa).

The interval 1–259 (MRKSIVLAAD…SEIAFQRSDL (259 aa)) is GT8 domain. UDP is bound by residues 8 to 13 (AADNAY) and 101 to 102 (DS). 3 residues coordinate Mn(2+): aspartate 101, aspartate 103, and histidine 221. A UDP-binding site is contributed by 221 to 227 (HYASHDK).

In the N-terminal section; belongs to the glycosyltransferase 8 family.

Functionally, may be involved in the polymorphic O-glycosylation of the serine-rich repeat protein PsrP. Has hydrolytic activity against UDP-galactose and to a lesser extent against UDP-glucose; no glycosyltransferase activity has been seen with tested substrates. This is Glycosyltransferase GlyF from Streptococcus pneumoniae serotype 4 (strain ATCC BAA-334 / TIGR4).